A 414-amino-acid polypeptide reads, in one-letter code: Histidine--tRNA ligase (414 aa).

This sequence belongs to the class-II aminoacyl-tRNA synthetase family. In terms of assembly, homodimer.

The protein localises to the cytoplasm. The catalysed reaction is tRNA(His) + L-histidine + ATP = L-histidyl-tRNA(His) + AMP + diphosphate + H(+). The chain is Histidine--tRNA ligase from Mycoplasma mycoides subsp. mycoides SC (strain CCUG 32753 / NCTC 10114 / PG1).